The primary structure comprises 599 residues: Serine hydroxymethyltransferase 6 (599 aa).

Residues 1-25 (MDRIAQSDLSLGFGSSHALPLPHPP) form a disordered region. An N6-(pyridoxal phosphate)lysine modification is found at Lys-374.

The protein belongs to the SHMT family. Homotetramer. The cofactor is pyridoxal 5'-phosphate.

Its subcellular location is the cytoplasm. The enzyme catalyses (6R)-5,10-methylene-5,6,7,8-tetrahydrofolate + glycine + H2O = (6S)-5,6,7,8-tetrahydrofolate + L-serine. It participates in one-carbon metabolism; tetrahydrofolate interconversion. Catalyzes the interconversion of serine and glycine. The chain is Serine hydroxymethyltransferase 6 (SHM6) from Arabidopsis thaliana (Mouse-ear cress).